The following is a 311-amino-acid chain: Cytosolic Fe-S cluster assembly factor Nubp1 homolog (311 aa).

Residues 1–20 (MQAPPPEHCPGVESENAGKG) are disordered. [4Fe-4S] cluster-binding residues include C9, C23, C26, and C32. 63–70 (GKGGVGKS) lines the ATP pocket. Residues C240 and C243 each contribute to the [4Fe-4S] cluster site.

The protein belongs to the Mrp/NBP35 ATP-binding proteins family. NUBP1/NBP35 subfamily. As to quaternary structure, heterotetramer of 2 Nubp1 and 2 Nubp2 chains. [4Fe-4S] cluster is required as a cofactor.

The protein resides in the cytoplasm. Functionally, component of the cytosolic iron-sulfur (Fe/S) protein assembly (CIA) machinery. Required for maturation of extramitochondrial Fe-S proteins. The Nubp1-Nubp2 heterotetramer forms a Fe-S scaffold complex, mediating the de novo assembly of an Fe-S cluster and its transfer to target apoproteins. The polypeptide is Cytosolic Fe-S cluster assembly factor Nubp1 homolog (Drosophila simulans (Fruit fly)).